A 3147-amino-acid polypeptide reads, in one-letter code: Probable polyketide synthase 1 (3147 aa).

The region spanning 12-457 (SSDVAVIGVG…GSNCHLIIQE (446 aa)) is the Ketosynthase family 3 (KS3) domain. Active-site for beta-ketoacyl synthase activity residues include cysteine 180 and histidine 319. The segment at 345–369 (QLNNFSTDGNDNDDDDDDNTSPEPL) is disordered. Over residues 354–364 (NDNDDDDDDNT) the composition is skewed to acidic residues. Histidine 380 functions as the For beta-ketoacyl synthase activity in the catalytic mechanism. Residues 672-705 (GIYPSISVGHSFGEVSSYYLSGIISLETACKIVY) form an acyl/malonyl transferase region. Serine 682 functions as the For acyl/malonyl transferase activity in the catalytic mechanism. Positions 976 to 1127 (NRLEGPTTSL…ATISLEQQQP (152 aa)) are N-terminal hotdog fold. The PKS/mFAS DH domain occupies 976 to 1298 (NRLEGPTTSL…IKSTNPKSTK (323 aa)). Histidine 1014 serves as the catalytic Proton acceptor; for dehydratase activity. Residues 1149–1298 (DISKLDKFEL…IKSTNPKSTK (150 aa)) are C-terminal hotdog fold. Aspartate 1209 acts as the Proton donor; for dehydratase activity in catalysis. Positions 2568–2645 (SSNISLQDKI…SFLEKVNGLS (78 aa)) constitute a Carrier domain. At serine 2605 the chain carries O-(pantetheine 4'-phosphoryl)serine. The segment at 2723-2747 (PSLSQSDVLKTPPIKSLNNTKNSSL) is disordered. A compositionally biased stretch (polar residues) spans 2738–2747 (SLNNTKNSSL). The chalcone synthase stretch occupies residues 2789–3147 (VLGIGISVPG…FEGCFLKNVV (359 aa)). Cysteine 2930 is a catalytic residue.

In the C-terminal section; belongs to the thiolase-like superfamily. Chalcone/stilbene synthases family. Homodimer. The cofactor is pantetheine 4'-phosphate.

The catalysed reaction is (E)-4-coumaroyl-CoA + 3 malonyl-CoA + 3 H(+) = 2',4,4',6'-tetrahydroxychalcone + 3 CO2 + 4 CoA. The protein operates within secondary metabolite biosynthesis; flavonoid biosynthesis. Its function is as follows. Probable polyketide synthase. Produces only acylpyrones; in vitro. This is Probable polyketide synthase 1 (stlA) from Dictyostelium discoideum (Social amoeba).